A 225-amino-acid chain; its full sequence is uncharacterized protein (225 aa).

This is an uncharacterized protein from Methanocaldococcus jannaschii (strain ATCC 43067 / DSM 2661 / JAL-1 / JCM 10045 / NBRC 100440) (Methanococcus jannaschii).